Here is a 126-residue protein sequence, read N- to C-terminus: Cystatin-like cysteine protease inhibitor EPIC1 (126 aa).

The first 21 residues, 1–21, serve as a signal peptide directing secretion; that stretch reads MTFLRPILALLAATALVTTSA. Asparagine 46 carries an N-linked (GlcNAc...) asparagine glycan. Residues 69–73 carry the Secondary area of contact motif; sequence QVVSG.

The protein belongs to the cystatin family. In terms of assembly, interacts with the host papain-like cysteine protease RCR3. Interacts with the host papain-like cysteine protease C14.

The protein localises to the secreted. Its function is as follows. Secreted effector that interacts with and inhibits the pathogenesis-related papain-like cysteine proteases C14 and RCR3 of host plants. Inhibition of host proteases by a pathogen extracellular protease inhibitor forms a specific type of defense-counterdefense mechanism between plants and microbial pathogens. The protein is Cystatin-like cysteine protease inhibitor EPIC1 of Phytophthora infestans (Potato late blight agent).